Consider the following 91-residue polypeptide: Large ribosomal subunit protein bL27 (91 aa).

A disordered region spans residues 1–21; that stretch reads MAHKKSGGSSRNGRDSAGRRL.

It belongs to the bacterial ribosomal protein bL27 family.

The chain is Large ribosomal subunit protein bL27 from Phenylobacterium zucineum (strain HLK1).